An 817-amino-acid chain; its full sequence is MSDLTPMIKQYLKIKEEYKDSILLFRLGDFYETFFEDAKKVSEILQIVLTKRNGNPMAGIPYHALNNYLKRLLDAGYKVAICEQMEDPQSSKGIVDRKVTRILTPGTIIDEGMLEESNRFAALITKNGNLYKIAIFDFSTGDFYLDSFDFKEDELLDFISSFGLVQILLSKELEQLSKKIKNLTNEIYVEILDEWYFSNNFKDHLKETYEVLSLDHLDYDDDELKVADAVLKYLEVTQFSKIKHMRLPKRFKTKNYMFLDSNTIENLGILPTNSNKGKTLYDILKLTKTSMGNRKLREFILTPLTDKENIEERLNKVEHLVEDPLLLEELKEYLASVKDLERISSRISLMKATPKDLIALKDSLEVVPYIIESLTSNPGLSDFFDGVDVLKEAKEFIENTIIEEPAIAPGNGKVIKEGVSGELDEYRNLFNNLDGVLKDIEKREKEKTKISSLKVGRNKIYGFYIEVSKAQSSKVPDNYVRKQTLVNTERYTIKELEEVEQRLALSEEKIKVIEKDIYDKVLTHLSQYVDKIEKLSNKIAELDVFRSFAEVSRVYNYKRPTFVQNSKEIKIINSRHPVVERFVDEFTPNDLFLSEDKFYIILTGPNMSGKSTFIRQIGLISVMAQIGCFVPAEKAEIPIYDGIFTRIGARDDIVSGKSTFLVEMLEVSTILNKATDNSLVLLDEVGRGTSTLDGISVAWAISEYLFQVKRCNTIFATHYTELTYMSHIYEEVAAKRIKVLETMDGVIFLHKIEDGTSDNSYGIEIARLAGFPIEIIERSKEILSQLSNRVDLESRLKRIKNINKKKYESQENQLKMF.

604–611 (GPNMSGKS) contacts ATP.

Belongs to the DNA mismatch repair MutS family.

Its function is as follows. This protein is involved in the repair of mismatches in DNA. It is possible that it carries out the mismatch recognition step. This protein has a weak ATPase activity. This is DNA mismatch repair protein MutS from Petrotoga mobilis (strain DSM 10674 / SJ95).